A 356-amino-acid polypeptide reads, in one-letter code: Histidinol-phosphate aminotransferase 1 (356 aa).

Lys-213 is subject to N6-(pyridoxal phosphate)lysine.

It belongs to the class-II pyridoxal-phosphate-dependent aminotransferase family. Histidinol-phosphate aminotransferase subfamily. Homodimer. It depends on pyridoxal 5'-phosphate as a cofactor.

It catalyses the reaction L-histidinol phosphate + 2-oxoglutarate = 3-(imidazol-4-yl)-2-oxopropyl phosphate + L-glutamate. The protein operates within amino-acid biosynthesis; L-histidine biosynthesis; L-histidine from 5-phospho-alpha-D-ribose 1-diphosphate: step 7/9. This is Histidinol-phosphate aminotransferase 1 from Burkholderia pseudomallei (strain K96243).